Reading from the N-terminus, the 351-residue chain is Tryptophan--tRNA ligase 2 (351 aa).

Positions 1–24 are disordered; sequence MPFVDLEVPTMTTPTPAATPARPR. Low complexity predominate over residues 9 to 24; it reads PTMTTPTPAATPARPR. Residues 31 to 39 carry the 'HIGH' region motif; the sequence is PTGALHLGH. The short motif at 215–219 is the 'KMSKS' region element; that stretch reads KMSKS. K218 lines the ATP pocket.

It belongs to the class-I aminoacyl-tRNA synthetase family. In terms of assembly, homodimer. Forms a complex with nos; one homodimer of trpS2 binds one homodimer of nos.

The enzyme catalyses tRNA(Trp) + L-tryptophan + ATP = L-tryptophyl-tRNA(Trp) + AMP + diphosphate + H(+). Functionally, catalyzes the formation of 5'adenyl-Trp and tRNA(Trp) but with 5-fold less activity than TrpRS. Increases the solubility of the nitric oxide synthase oxygenase (nos), as well as its affinity for substrate L-arginine and its nitric-oxide synthase activity. The complex between trpS2 and nos catalyzes the regioselective nitration of tryptophan at the 4-position. The chain is Tryptophan--tRNA ligase 2 (trpS2) from Deinococcus radiodurans (strain ATCC 13939 / DSM 20539 / JCM 16871 / CCUG 27074 / LMG 4051 / NBRC 15346 / NCIMB 9279 / VKM B-1422 / R1).